We begin with the raw amino-acid sequence, 355 residues long: tRNA uridine(34) hydroxylase (355 aa).

The 95-residue stretch at 146–240 folds into the Rhodanese domain; it reads KDPDALFVDM…YVRTAKKKDL (95 aa). The active-site Cysteine persulfide intermediate is Cys-200.

Belongs to the TrhO family.

The catalysed reaction is uridine(34) in tRNA + AH2 + O2 = 5-hydroxyuridine(34) in tRNA + A + H2O. In terms of biological role, catalyzes oxygen-dependent 5-hydroxyuridine (ho5U) modification at position 34 in tRNAs. This chain is tRNA uridine(34) hydroxylase, found in Hamiltonella defensa subsp. Acyrthosiphon pisum (strain 5AT).